Here is a 306-residue protein sequence, read N- to C-terminus: Low-density lipoprotein receptor class A domain-containing protein 4 (306 aa).

The Lumenal portion of the chain corresponds to 1–64 (MPEAGFQATN…PPGIFNSELE (64 aa)). Residues 16–48 (KFTCTSGKCLYLGSLVCNQQNDCGDNSDEENCL) enclose the LDL-receptor class A domain. 2 disulfide bridges follow: Cys19-Cys38 and Cys32-Cys47. A helical membrane pass occupies residues 65-85 (FAQIIIIVVVVTVMVVVIVCL). Topologically, residues 86–306 (LNHYKVSTRS…GKDRKPGNLV (221 aa)) are cytoplasmic. The short motif at 180–183 (PPPY) is the PPxY motif 1 element. The SMAD interaction motif (SIM) motif lies at 208 to 211 (PPNR). A PPxY motif 2 motif is present at residues 252-255 (PPTY). Residues 286 to 306 (NNAESTIVPIKGKDRKPGNLV) form a disordered region. Over residues 296–306 (KGKDRKPGNLV) the composition is skewed to basic and acidic residues.

It belongs to the PMEPA1 family. As to quaternary structure, interacts with PMEPA1. Interacts (via the SMAD interaction motif) with SMAD2 and SMAD3. In terms of tissue distribution, expressed in lymphocytes.

It is found in the early endosome membrane. In terms of biological role, functions as a negative regulator of TGF-beta signaling and thereby probably plays a role in cell proliferation, differentiation, apoptosis, motility, extracellular matrix production and immunosuppression. In the canonical TGF-beta pathway, ZFYVE9/SARA recruits the intracellular signal transducer and transcriptional modulators SMAD2 and SMAD3 to the TGF-beta receptor. Phosphorylated by the receptor, SMAD2 and SMAD3 then form a heteromeric complex with SMAD4 that translocates to the nucleus to regulate transcription. Through interaction with SMAD2 and SMAD3, LDLRAD4 may compete with ZFYVE9 and SMAD4 and prevent propagation of the intracellular signal. This is Low-density lipoprotein receptor class A domain-containing protein 4 (LDLRAD4) from Homo sapiens (Human).